A 119-amino-acid chain; its full sequence is Methylglyoxal synthase (119 aa).

The region spanning 1-119 is the MGS-like domain; sequence MRIALIAHDK…GTADLIIKQF (119 aa). Residues His-8, Lys-12, 34 to 37, and 54 to 55 contribute to the substrate site; these read TGTT and SG. Asp-60 acts as the Proton donor/acceptor in catalysis. Substrate is bound at residue His-87.

It belongs to the methylglyoxal synthase family.

The enzyme catalyses dihydroxyacetone phosphate = methylglyoxal + phosphate. In terms of biological role, catalyzes the formation of methylglyoxal from dihydroxyacetone phosphate. This is Methylglyoxal synthase from Clostridium botulinum (strain Eklund 17B / Type B).